We begin with the raw amino-acid sequence, 92 residues long: Small ribosomal subunit protein uS19c (92 aa).

It belongs to the universal ribosomal protein uS19 family.

It localises to the plastid. The protein resides in the chloroplast. Protein S19 forms a complex with S13 that binds strongly to the 16S ribosomal RNA. This Physcomitrium patens (Spreading-leaved earth moss) protein is Small ribosomal subunit protein uS19c.